The chain runs to 270 residues: 2-oxoglutarate synthase subunit KorB (270 aa).

As to quaternary structure, heterotetramer of the KorA, KorB, KorC and KorD subunits.

It catalyses the reaction 2 oxidized [2Fe-2S]-[ferredoxin] + 2-oxoglutarate + CoA = succinyl-CoA + 2 reduced [2Fe-2S]-[ferredoxin] + CO2 + H(+). This Methanocaldococcus jannaschii (strain ATCC 43067 / DSM 2661 / JAL-1 / JCM 10045 / NBRC 100440) (Methanococcus jannaschii) protein is 2-oxoglutarate synthase subunit KorB (korB).